The chain runs to 546 residues: Chaperonin GroEL (546 aa).

ATP is bound by residues 29-32, Lys-50, 86-90, Gly-414, and Asp-495; these read TLGP and DGTTT. The interval 526–546 is disordered; that stretch reads AKEGAPAGGGMPDMGGMGGMM. Gly residues predominate over residues 531 to 546; the sequence is PAGGGMPDMGGMGGMM.

Belongs to the chaperonin (HSP60) family. Forms a cylinder of 14 subunits composed of two heptameric rings stacked back-to-back. Interacts with the co-chaperonin GroES.

It is found in the cytoplasm. The enzyme catalyses ATP + H2O + a folded polypeptide = ADP + phosphate + an unfolded polypeptide.. Together with its co-chaperonin GroES, plays an essential role in assisting protein folding. The GroEL-GroES system forms a nano-cage that allows encapsulation of the non-native substrate proteins and provides a physical environment optimized to promote and accelerate protein folding. The protein is Chaperonin GroEL of Jannaschia sp. (strain CCS1).